The chain runs to 234 residues: Mediator of RNA polymerase II transcription subunit 4 (234 aa).

The stretch at 71–124 (HQEAYRRLVEKKNEVAGLEMRVRGLVKRLEEGRKELEGMIDQGERSLEDIEKSE) forms a coiled coil. The tract at residues 188-234 (GVVGEEQKAPQKVEERREHVEHEESDRRYDPNAVFQLDLNSDESDED) is disordered. The span at 189 to 217 (VVGEEQKAPQKVEERREHVEHEESDRRYD) shows a compositional bias: basic and acidic residues.

Belongs to the Mediator complex subunit 4 family. In terms of assembly, component of the Mediator complex.

The protein localises to the nucleus. Component of the Mediator complex, a coactivator involved in the regulated transcription of nearly all RNA polymerase II-dependent genes. Mediator functions as a bridge to convey information from gene-specific regulatory proteins to the basal RNA polymerase II transcription machinery. Mediator is recruited to promoters by direct interactions with regulatory proteins and serves as a scaffold for the assembly of a functional preinitiation complex with RNA polymerase II and the general transcription factors. The protein is Mediator of RNA polymerase II transcription subunit 4 (MED4) of Cryptococcus neoformans var. neoformans serotype D (strain JEC21 / ATCC MYA-565) (Filobasidiella neoformans).